Reading from the N-terminus, the 252-residue chain is uncharacterized protein (252 aa).

The protein belongs to the methyltransferase superfamily.

This is an uncharacterized protein from Mycobacterium sp. (strain KMS).